The primary structure comprises 234 residues: Uridylate kinase (234 aa).

An ATP-binding site is contributed by 9 to 12 (KLSG). Gly51 provides a ligand contact to UMP. Positions 52 and 56 each coordinate ATP. Residues Asp71 and 132–139 (CGNPFFTT) each bind UMP. 3 residues coordinate ATP: Thr159, Tyr165, and Asp168.

The protein belongs to the UMP kinase family. In terms of assembly, homohexamer.

Its subcellular location is the cytoplasm. The enzyme catalyses UMP + ATP = UDP + ADP. The protein operates within pyrimidine metabolism; CTP biosynthesis via de novo pathway; UDP from UMP (UMPK route): step 1/1. Its activity is regulated as follows. Inhibited by UTP. Functionally, catalyzes the reversible phosphorylation of UMP to UDP. This Prochlorococcus marinus (strain MIT 9312) protein is Uridylate kinase.